A 201-amino-acid polypeptide reads, in one-letter code: Large ribosomal subunit protein uL4 (201 aa).

The segment at 44-71 (RAQKTRAEVTGSGKKPWRQKGTGRARSG) is disordered.

It belongs to the universal ribosomal protein uL4 family. As to quaternary structure, part of the 50S ribosomal subunit.

In terms of biological role, one of the primary rRNA binding proteins, this protein initially binds near the 5'-end of the 23S rRNA. It is important during the early stages of 50S assembly. It makes multiple contacts with different domains of the 23S rRNA in the assembled 50S subunit and ribosome. Functionally, forms part of the polypeptide exit tunnel. In Pectobacterium carotovorum subsp. carotovorum (strain PC1), this protein is Large ribosomal subunit protein uL4.